The sequence spans 239 residues: Riboflavin synthase (239 aa).

Lumazine-binding repeat units lie at residues 1-105 (MFTG…MGGH) and 106-205 (VVQG…EKQI). 2,4-dihydroxypteridine contacts are provided by residues 4–6 (GLV), 54–56 (CLT), 70–75 (GISPET), 109–111 (GHV), lysine 145, 154–156 (SLT), and 170–175 (SMVSYT).

In terms of assembly, homotrimer.

It carries out the reaction 2 6,7-dimethyl-8-(1-D-ribityl)lumazine + H(+) = 5-amino-6-(D-ribitylamino)uracil + riboflavin. It functions in the pathway cofactor biosynthesis; riboflavin biosynthesis; riboflavin from 2-hydroxy-3-oxobutyl phosphate and 5-amino-6-(D-ribitylamino)uracil: step 2/2. Catalyzes the dismutation of two molecules of 6,7-dimethyl-8-ribityllumazine, resulting in the formation of riboflavin and 5-amino-6-(D-ribitylamino)uracil. The protein is Riboflavin synthase (RIB5) of Meyerozyma guilliermondii (strain ATCC 6260 / CBS 566 / DSM 6381 / JCM 1539 / NBRC 10279 / NRRL Y-324) (Yeast).